Consider the following 557-residue polypeptide: MFS-type transporter clz4 (557 aa).

A run of 14 helical transmembrane segments spans residues 22 to 42 (LIIV…DHNG), 59 to 79 (SITW…VLYG), 89 to 109 (ALFV…GFAT), 120 to 140 (LTGA…TDVV), 150 to 170 (AVVA…AAGV), 179 to 199 (GLFW…GYIL), 217 to 237 (WLGS…VSGP), 245 to 265 (SLLV…FLFI), 269 to 289 (LATL…SALL), 319 to 339 (VISG…SMIA), 346 to 366 (SGQY…GSLL), 379 to 399 (VIIV…PMVI), 419 to 439 (FFRF…LQST), and 479 to 499 (HVYI…FVWK). Residues 505 to 523 (SRPTENNDDIEHAPARGIE) show a composition bias toward basic and acidic residues. The disordered stretch occupies residues 505-557 (SRPTENNDDIEHAPARGIEREDEQSSLIYDREPSAVSYGTVEAGEPNRLRRGG).

The protein belongs to the major facilitator superfamily. TCR/Tet family.

It localises to the membrane. Functionally, MFS-type transporter; part of the gene cluster that mediates the biosynthesis of squalestatin S1 (SQS1, also known as zaragozic acid A), a heavily oxidized fungal polyketide that offers potent cholesterol lowering activity by targeting squalene synthase (SS). The chain is MFS-type transporter clz4 from Cochliobolus lunatus (Filamentous fungus).